The primary structure comprises 110 residues: Small ribosomal subunit protein bS16 (110 aa).

Residues 82 to 103 show a composition bias toward basic and acidic residues; it reads VKKREARNNPEKAVPRKERKAQ. The tract at residues 82 to 110 is disordered; it reads VKKREARNNPEKAVPRKERKAQAEAAAKG.

The protein belongs to the bacterial ribosomal protein bS16 family.

In Bradyrhizobium sp. (strain ORS 278), this protein is Small ribosomal subunit protein bS16.